Reading from the N-terminus, the 262-residue chain is 3-deoxy-manno-octulosonate cytidylyltransferase (262 aa).

Belongs to the KdsB family.

It localises to the cytoplasm. It catalyses the reaction 3-deoxy-alpha-D-manno-oct-2-ulosonate + CTP = CMP-3-deoxy-beta-D-manno-octulosonate + diphosphate. The protein operates within nucleotide-sugar biosynthesis; CMP-3-deoxy-D-manno-octulosonate biosynthesis; CMP-3-deoxy-D-manno-octulosonate from 3-deoxy-D-manno-octulosonate and CTP: step 1/1. It participates in bacterial outer membrane biogenesis; lipopolysaccharide biosynthesis. In terms of biological role, activates KDO (a required 8-carbon sugar) for incorporation into bacterial lipopolysaccharide in Gram-negative bacteria. The sequence is that of 3-deoxy-manno-octulosonate cytidylyltransferase from Acidovorax sp. (strain JS42).